A 641-amino-acid polypeptide reads, in one-letter code: ATP-dependent zinc metalloprotease FtsH (641 aa).

Over 1 to 16 the chain is Cytoplasmic; sequence MNKQQKPKRSPLRPDY. The chain crosses the membrane as a helical span at residues 17–37; it reads LVIVIIILLAIGMYFFFTEMM. Topologically, residues 38 to 131 are extracellular; it reads APKVKQFDEF…VSFVPHVSVD (94 aa). The chain crosses the membrane as a helical span at residues 132 to 152; the sequence is FWNIISTLLLIAAPIVLVVIM. The Cytoplasmic portion of the chain corresponds to 153–641; the sequence is FRSMSSQSNK…EVEEDSKKSE (489 aa). Residue 222-229 coordinates ATP; sequence GQPGTGKT. Histidine 444 is a binding site for Zn(2+). Residue glutamate 445 is part of the active site. Residues histidine 448 and aspartate 520 each coordinate Zn(2+).

The protein in the central section; belongs to the AAA ATPase family. It in the C-terminal section; belongs to the peptidase M41 family. In terms of assembly, homohexamer. It depends on Zn(2+) as a cofactor.

It localises to the cell membrane. Its function is as follows. Acts as a processive, ATP-dependent zinc metallopeptidase for both cytoplasmic and membrane proteins. Plays a role in the quality control of integral membrane proteins. The chain is ATP-dependent zinc metalloprotease FtsH from Acholeplasma laidlawii (strain PG-8A).